We begin with the raw amino-acid sequence, 299 residues long: Acetylglutamate kinase (299 aa).

Substrate-binding positions include 68 to 69 (GG), R90, and N195.

It belongs to the acetylglutamate kinase family. ArgB subfamily.

The protein localises to the cytoplasm. It catalyses the reaction N-acetyl-L-glutamate + ATP = N-acetyl-L-glutamyl 5-phosphate + ADP. It functions in the pathway amino-acid biosynthesis; L-arginine biosynthesis; N(2)-acetyl-L-ornithine from L-glutamate: step 2/4. In terms of biological role, catalyzes the ATP-dependent phosphorylation of N-acetyl-L-glutamate. This is Acetylglutamate kinase from Erythrobacter litoralis (strain HTCC2594).